Here is a 370-residue protein sequence, read N- to C-terminus: Dual-specificity RNA methyltransferase RlmN (370 aa).

E93 serves as the catalytic Proton acceptor. Residues 99 to 337 (EEGRGTLCVS…VTTVRKTRGD (239 aa)) form the Radical SAM core domain. C106 and C343 are disulfide-bonded. [4Fe-4S] cluster-binding residues include C113, C117, and C120. Residues 167-168 (GE), S199, 221-223 (SLH), and N300 each bind S-adenosyl-L-methionine. Catalysis depends on C343, which acts as the S-methylcysteine intermediate.

Belongs to the radical SAM superfamily. RlmN family. [4Fe-4S] cluster is required as a cofactor.

It is found in the cytoplasm. The catalysed reaction is adenosine(2503) in 23S rRNA + 2 reduced [2Fe-2S]-[ferredoxin] + 2 S-adenosyl-L-methionine = 2-methyladenosine(2503) in 23S rRNA + 5'-deoxyadenosine + L-methionine + 2 oxidized [2Fe-2S]-[ferredoxin] + S-adenosyl-L-homocysteine. It carries out the reaction adenosine(37) in tRNA + 2 reduced [2Fe-2S]-[ferredoxin] + 2 S-adenosyl-L-methionine = 2-methyladenosine(37) in tRNA + 5'-deoxyadenosine + L-methionine + 2 oxidized [2Fe-2S]-[ferredoxin] + S-adenosyl-L-homocysteine. Functionally, specifically methylates position 2 of adenine 2503 in 23S rRNA and position 2 of adenine 37 in tRNAs. m2A2503 modification seems to play a crucial role in the proofreading step occurring at the peptidyl transferase center and thus would serve to optimize ribosomal fidelity. In Francisella tularensis subsp. mediasiatica (strain FSC147), this protein is Dual-specificity RNA methyltransferase RlmN.